A 440-amino-acid polypeptide reads, in one-letter code: Gamma-aminobutyric acid receptor subunit pi (440 aa).

The signal sequence occupies residues 1-23; that stretch reads MSYSLYLAFLCLSLLTQRTCIQG. The Extracellular portion of the chain corresponds to 24-241; sequence NQVNVEVSRS…LVLQFELRRN (218 aa). N43, N102, and N145 each carry an N-linked (GlcNAc...) asparagine glycan. A disulfide bridge links C160 with C174. N-linked (GlcNAc...) asparagine glycans are attached at residues N196 and N228. Residues 242–262 traverse the membrane as a helical segment; sequence VLYFILETYVPSTFLVVLSWV. Topologically, residues 263 to 270 are cytoplasmic; sequence SFWISLDS. A helical transmembrane segment spans residues 271–290; sequence VPARTCIGVTTVLSMTTLMI. At 291-301 the chain is on the extracellular side; sequence GSRTSLPNTNC. A helical membrane pass occupies residues 302-322; that stretch reads FIKAIDVYLGICFSFVFGALL. Topologically, residues 323–419 are cytoplasmic; it reads EYAVAHYSSL…NPSNVDRYSK (97 aa). Residues 420–440 traverse the membrane as a helical segment; it reads LLFPLIFMLANVFYWAYYMYF.

The protein belongs to the ligand-gated ion channel (TC 1.A.9) family. Gamma-aminobutyric acid receptor (TC 1.A.9.5) subfamily. GABRP sub-subfamily. In terms of assembly, heteropentamer, formed by a combination of alpha (GABRA1-6), beta (GABRB1-3), gamma (GABRG1-3), delta (GABRD), epsilon (GABRE), rho (GABRR1-3), pi (GABRP) and theta (GABRQ) chains, each subunit exhibiting distinct physiological and pharmacological properties.

Its subcellular location is the cell membrane. It localises to the apical cell membrane. The catalysed reaction is chloride(in) = chloride(out). Its function is as follows. Pi subunit of the heteropentameric ligand-gated chloride channel gated by gamma-aminobutyric acid (GABA). GABA-gated chloride channels, also named GABA(A) receptors (GABAAR), consist of five subunits arranged around a central pore and contain GABA active binding site(s) located at the alpha and beta subunit interfaces. When activated by GABA, GABAARs selectively allow the flow of chloride anions across the cell membrane down their electrochemical gradient. Pi-containing GABAARs are mostly located in peripheral tissues. In the uterus, pi subunits modulate uterus contraction by altering the sensitivity of GABAARs to pregnanolone. In the lungs, pi-containing GABAARs contribute to pulmonary fluid transport via luminal secretion of chloride. This is Gamma-aminobutyric acid receptor subunit pi from Mus musculus (Mouse).